We begin with the raw amino-acid sequence, 130 residues long: Small ribosomal subunit protein uS9 (130 aa).

The protein belongs to the universal ribosomal protein uS9 family.

The sequence is that of Small ribosomal subunit protein uS9 from Bacillus thuringiensis subsp. konkukian (strain 97-27).